We begin with the raw amino-acid sequence, 666 residues long: Endogenous retrovirus group K member 10 Gag polyprotein (666 aa).

A lipid anchor (N-myristoyl glycine) is attached at G2. Residues 164–183 (EGKGPELMGPSESKPRGTSP) form a disordered region. CCHC-type zinc fingers lie at residues 544–561 (GKCY…NCPV) and 580–597 (DLCP…QCRS). Residues 598-642 (KFDKNGQPLSGNEQRGQPQAPQQTGAFPIQPFVPQGFQGQQPPLS) form a disordered region. The segment covering 604-622 (QPLSGNEQRGQPQAPQQTG) has biased composition (polar residues). Positions 624–640 (FPIQPFVPQGFQGQQPP) are enriched in low complexity.

Belongs to the beta type-B retroviral Gag protein family. HERV class-II K(HML-2) gag subfamily. Post-translationally, myristoylation is essential for retroviral assembly. Alteration of the glycine residue leads to a block in the budding of particles and an accumulation of Gag inside the cell. Specific enzymatic cleavages may yield mature proteins.

The protein resides in the cell membrane. In terms of biological role, the products of the Gag polyproteins of infectious retroviruses perform highly complex orchestrated tasks during the assembly, budding, maturation, and infection stages of the viral replication cycle. During viral assembly, the proteins form membrane associations and self-associations that ultimately result in budding of an immature virion from the infected cell. Gag precursors also function during viral assembly to selectively bind and package two plus strands of genomic RNA. Endogenous Gag proteins may have kept, lost or modified their original function during evolution. The sequence is that of Endogenous retrovirus group K member 10 Gag polyprotein (ERVK-10) from Homo sapiens (Human).